We begin with the raw amino-acid sequence, 219 residues long: uncharacterized protein (219 aa).

A Phosphoserine modification is found at S23. K137 participates in a covalent cross-link: Glycyl lysine isopeptide (Lys-Gly) (interchain with G-Cter in SUMO).

The protein localises to the cytoplasm. This is an uncharacterized protein from Saccharomyces cerevisiae (strain ATCC 204508 / S288c) (Baker's yeast).